We begin with the raw amino-acid sequence, 410 residues long: Chitin deacetylase 3 (410 aa).

The signal sequence occupies residues 1–18; the sequence is MYGHLSLSTLSLLAVVAA. Positions 19 to 39 are excised as a propeptide; it reads APFHESWLQPRDSDVSQLFRR. 2 N-linked (GlcNAc...) asparagine glycosylation sites follow: asparagine 61 and asparagine 80. Positions 124–314 constitute a NodB homology domain; that stretch reads KVWALSFDDG…KAVANGWSVK (191 aa). Aspartate 131 functions as the Proton acceptor in the catalytic mechanism. An acetate-binding site is contributed by aspartate 131. Co(2+) is bound at residue aspartate 132. Asparagine 149 is a glycosylation site (N-linked (GlcNAc...) asparagine). Co(2+)-binding residues include histidine 183 and histidine 187. Tyrosine 225 contributes to the acetate binding site. Residue asparagine 279 is glycosylated (N-linked (GlcNAc...) asparagine). Catalysis depends on histidine 289, which acts as the Proton donor. A glycan (N-linked (GlcNAc...) asparagine) is linked at asparagine 293. The GPI-anchor amidated serine moiety is linked to residue serine 385. The propeptide at 386 to 410 is removed in mature form; sequence SSWPIANRPSLFVIACGLALAAIMV.

The protein belongs to the polysaccharide deacetylase family. Requires Co(2+) as cofactor.

Its subcellular location is the cell membrane. The catalysed reaction is [(1-&gt;4)-N-acetyl-beta-D-glucosaminyl](n) + n H2O = chitosan + n acetate. Its function is as follows. Hydrolyzes the N-acetamido groups of N-acetyl-D-glucosamine residues in chitin to form chitosan and acetate. Chitosan is required to anchor melanin to the cell wall, for maintenance of cell wall integrity, and for proper cytokinesis. Chitosan offers an advantage during infection as it is less readily detected than chitin by host immunosurveillance mechanisms. This is Chitin deacetylase 3 from Cryptococcus neoformans var. neoformans serotype D (strain B-3501A) (Filobasidiella neoformans).